An 87-amino-acid polypeptide reads, in one-letter code: Small ribosomal subunit protein bS20 (87 aa).

Positions 1–11 (MAHHKSAIKRI) are enriched in basic residues. The disordered stretch occupies residues 1-26 (MAHHKSAIKRIKQNEKRNARNRHQKS).

The protein belongs to the bacterial ribosomal protein bS20 family.

Functionally, binds directly to 16S ribosomal RNA. The chain is Small ribosomal subunit protein bS20 from Trichlorobacter lovleyi (strain ATCC BAA-1151 / DSM 17278 / SZ) (Geobacter lovleyi).